Here is a 247-residue protein sequence, read N- to C-terminus: 2,3-bisphosphoglycerate-dependent phosphoglycerate mutase (247 aa).

Substrate is bound by residues 8 to 15 (RHGESTWN), 21 to 22 (TG), arginine 60, 87 to 90 (ERHY), lysine 98, 114 to 115 (RR), and 183 to 184 (GN). Histidine 9 (tele-phosphohistidine intermediate) is an active-site residue. The Proton donor/acceptor role is filled by glutamate 87.

Belongs to the phosphoglycerate mutase family. BPG-dependent PGAM subfamily. As to quaternary structure, homodimer.

It catalyses the reaction (2R)-2-phosphoglycerate = (2R)-3-phosphoglycerate. The protein operates within carbohydrate degradation; glycolysis; pyruvate from D-glyceraldehyde 3-phosphate: step 3/5. Its function is as follows. Catalyzes the interconversion of 2-phosphoglycerate and 3-phosphoglycerate. This chain is 2,3-bisphosphoglycerate-dependent phosphoglycerate mutase, found in Methylibium petroleiphilum (strain ATCC BAA-1232 / LMG 22953 / PM1).